The sequence spans 317 residues: Aspartate carbamoyltransferase catalytic subunit (317 aa).

The carbamoyl phosphate site is built by arginine 65 and threonine 66. Lysine 93 is a binding site for L-aspartate. Carbamoyl phosphate is bound by residues arginine 115, histidine 145, and glutamine 148. Residues arginine 178 and arginine 233 each coordinate L-aspartate. The carbamoyl phosphate site is built by glycine 274 and proline 275.

The protein belongs to the aspartate/ornithine carbamoyltransferase superfamily. ATCase family. In terms of assembly, heterododecamer (2C3:3R2) of six catalytic PyrB chains organized as two trimers (C3), and six regulatory PyrI chains organized as three dimers (R2).

It catalyses the reaction carbamoyl phosphate + L-aspartate = N-carbamoyl-L-aspartate + phosphate + H(+). The protein operates within pyrimidine metabolism; UMP biosynthesis via de novo pathway; (S)-dihydroorotate from bicarbonate: step 2/3. Its function is as follows. Catalyzes the condensation of carbamoyl phosphate and aspartate to form carbamoyl aspartate and inorganic phosphate, the committed step in the de novo pyrimidine nucleotide biosynthesis pathway. In Bordetella bronchiseptica (strain ATCC BAA-588 / NCTC 13252 / RB50) (Alcaligenes bronchisepticus), this protein is Aspartate carbamoyltransferase catalytic subunit.